Reading from the N-terminus, the 138-residue chain is 1,4-dihydroxy-2-naphthoyl-CoA hydrolase (138 aa).

D13 is an active-site residue.

Belongs to the 4-hydroxybenzoyl-CoA thioesterase family. DHNA-CoA hydrolase subfamily.

The enzyme catalyses 1,4-dihydroxy-2-naphthoyl-CoA + H2O = 1,4-dihydroxy-2-naphthoate + CoA + H(+). It participates in cofactor biosynthesis; phylloquinone biosynthesis. Its pathway is quinol/quinone metabolism; 1,4-dihydroxy-2-naphthoate biosynthesis; 1,4-dihydroxy-2-naphthoate from chorismate: step 7/7. In terms of biological role, catalyzes the hydrolysis of 1,4-dihydroxy-2-naphthoyl-CoA (DHNA-CoA) to 1,4-dihydroxy-2-naphthoate (DHNA), a reaction involved in phylloquinone (vitamin K1) biosynthesis. The polypeptide is 1,4-dihydroxy-2-naphthoyl-CoA hydrolase (Microcystis aeruginosa (strain NIES-843 / IAM M-2473)).